The following is a 91-amino-acid chain: Acylphosphatase (91 aa).

The Acylphosphatase-like domain maps to 5 to 91 (CSKFIVSGHV…EHDYQGFEIL (87 aa)). Active-site residues include Arg-20 and Asn-38.

It belongs to the acylphosphatase family.

The enzyme catalyses an acyl phosphate + H2O = a carboxylate + phosphate + H(+). This is Acylphosphatase (acyP) from Vibrio cholerae serotype O1 (strain ATCC 39315 / El Tor Inaba N16961).